The sequence spans 226 residues: Sugar transporter SWEET1 (226 aa).

7 consecutive transmembrane segments (helical) span residues 8–28, 42–62, 67–87, 94–114, 127–147, 161–181, and 185–205; these read LLSTTAVISTVFQFLSGAMIC, GVPFICGFLSCSFWLRYGVLT, IVLVNIIGSTLFLIYTLIYYV, AFVRQFAFVLAVLIAVVVVYT, ITGIFCCIVTVCFFAAPLATL, LPLIATSFLVSLQWLIYGILI, and FIQIPNFLGCLLSMLQLSLFV. The 85-residue stretch at 8-92 folds into the MtN3/slv 1 domain; it reads LLSTTAVIST…LIYYVFTVNK (85 aa). In terms of domain architecture, MtN3/slv 2 spans 129-210; it reads GIFCCIVTVC…LSLFVVYPPR (82 aa).

Belongs to the SWEET sugar transporter family.

It localises to the golgi apparatus membrane. It is found in the cell membrane. In terms of biological role, mediates both low-affinity uptake and efflux of sugar across the membrane. The sequence is that of Sugar transporter SWEET1 (slv) from Drosophila pseudoobscura pseudoobscura (Fruit fly).